The following is a 235-amino-acid chain: Orotidine 5'-phosphate decarboxylase (235 aa).

Residues aspartate 16, lysine 38, 65–74 (DLKLHDIGNT), threonine 120, arginine 181, glutamine 190, glycine 210, and arginine 211 contribute to the substrate site. The active-site Proton donor is lysine 67.

Belongs to the OMP decarboxylase family. Type 1 subfamily. Homodimer.

The catalysed reaction is orotidine 5'-phosphate + H(+) = UMP + CO2. Its pathway is pyrimidine metabolism; UMP biosynthesis via de novo pathway; UMP from orotate: step 2/2. In terms of biological role, catalyzes the decarboxylation of orotidine 5'-monophosphate (OMP) to uridine 5'-monophosphate (UMP). In Rhodopseudomonas palustris (strain BisA53), this protein is Orotidine 5'-phosphate decarboxylase.